The following is a 540-amino-acid chain: Amino acid transporter AVT1B (540 aa).

Residues 1–11 (MNHSTSDQSLY) show a composition bias toward polar residues. The segment at 1-55 (MNHSTSDQSLYIESDDGDDERKHLSDDEDDDGTLSDTSDAYNQNQHHLSKASPYS) is disordered. Helical transmembrane passes span 155 to 175 (AVLNGVNVLCGVGILSTPYAV), 180 to 200 (WLGLIILFAFGILCFYTGLLL), 227 to 247 (ILVSVILYMELYAMSVEYIIL), 273 to 293 (LFALLTTLAVLPTVWLRDLSV), 297 to 317 (ISAGGVIASVLVVLCLFWVGL), 332 to 352 (LATLPVSVGLYGYCYSGHGVF), 367 to 387 (AVLLASFGICTLMYAGVAVMG), 412 to 432 (IALWTTVVNPFTKYALTLSPV), 452 to 474 (IAIRSALAISTLLVGLAIPFFGL), 478 to 500 (LIGSFLTMLITLILPPACFLSIL), and 511 to 531 (ICILIMTVGAVCSVIGTYSAL).

Belongs to the amino acid/polyamine transporter 2 family. Amino acid/auxin permease (AAAP) (TC 2.A.18.5) subfamily.

Its subcellular location is the membrane. This Arabidopsis thaliana (Mouse-ear cress) protein is Amino acid transporter AVT1B.